A 235-amino-acid chain; its full sequence is Carboxymethylenebutenolidase 2 (235 aa).

Active-site residues include Cys117, Asp173, and His204.

It belongs to the dienelactone hydrolase family. In terms of assembly, monomer.

It carries out the reaction 2-(5-oxo-2,5-dihydrofuran-2-ylidene)acetate + H2O = 4-oxohex-2-enedioate + H(+). It participates in aromatic compound metabolism; 3-chlorocatechol degradation. Functionally, ring cleavage of cyclic ester dienelactone to produce maleylacetate. The protein is Carboxymethylenebutenolidase 2 (tfdEII) of Cupriavidus pinatubonensis (strain JMP 134 / LMG 1197) (Cupriavidus necator (strain JMP 134)).